Here is a 440-residue protein sequence, read N- to C-terminus: G-protein coupled receptor family C group 5 member C (440 aa).

The first 22 residues, 1–22 (MATHRTLLMCLGLPLFFPGALA), serve as a signal peptide directing secretion. Over 23–49 (QNHAPPGCSPDLDPLYYNLCDRSGAWG) the chain is Extracellular. The helical transmembrane segment at 50–70 (IVSEAVAGAGIITTFVLTIIL) threads the bilayer. The Cytoplasmic segment spans residues 71–84 (VASLPFVQDTKKRS). A helical transmembrane segment spans residues 85-105 (LLGTQVFFLLGTLGLFCLVFA). Topologically, residues 106 to 119 (CVVKPDFSTCASRR) are extracellular. The chain crosses the membrane as a helical span at residues 120–140 (FLFGVLFAICFSCLVAHVLSL). At 141–155 (NFLTRKNHGPRGWVI) the chain is on the cytoplasmic side. The chain crosses the membrane as a helical span at residues 156-176 (FTVALLLTLVEVIINTEWLII). The Extracellular portion of the chain corresponds to 177 to 207 (TLVRGGGQVSPLGNVSADSTMTSPCAIANMD). N190 carries an N-linked (GlcNAc...) asparagine glycan. The helical transmembrane segment at 208 to 228 (FVMALIYVMLLLLTAFLGAWP) threads the bilayer. Residues 229-240 (TLCGRFKRWRKH) lie on the Cytoplasmic side of the membrane. A helical transmembrane segment spans residues 241 to 261 (GVFVLLTTVISIAIWVVWIVM). The Extracellular portion of the chain corresponds to 262-278 (YTYGNEQHHSPTWDDPT). A helical transmembrane segment spans residues 279–299 (LAIALAANAWTFVLFYVIPEV). Residues 300 to 440 (SQVTKPSPEQ…QVFRNPYVWD (141 aa)) lie on the Cytoplasmic side of the membrane. Phosphoserine is present on residues S343, S382, S402, and S405. Y413 is subject to Phosphotyrosine. A Phosphothreonine modification is found at T422.

It belongs to the G-protein coupled receptor 3 family.

It localises to the cell membrane. Its function is as follows. This retinoic acid-inducible G-protein coupled receptor provide evidence for a possible interaction between retinoid and G-protein signaling pathways. The sequence is that of G-protein coupled receptor family C group 5 member C (Gprc5c) from Mus musculus (Mouse).